The following is a 130-amino-acid chain: Small ribosomal subunit protein uS17m (130 aa).

Belongs to the universal ribosomal protein uS17 family. As to quaternary structure, component of the mitochondrial ribosome small subunit (28S) which comprises a 12S rRNA and about 30 distinct proteins.

It is found in the mitochondrion. This chain is Small ribosomal subunit protein uS17m (MRPS17), found in Bos taurus (Bovine).